A 501-amino-acid polypeptide reads, in one-letter code: Orsellinic acid/F9775 biosynthesis cluster protein D (501 aa).

Residues 137-189 (EVTPTTEDEDDEENESENDEEEGDVDLEEQEDDNGGRQSTTVTTSPGPSAPSV) are disordered. A compositionally biased stretch (acidic residues) spans 142 to 169 (TEDEDDEENESENDEEEGDVDLEEQEDD). Polar residues predominate over residues 172-183 (GRQSTTVTTSPG).

Part of the gene cluster that mediates the biosynthesis of orsellinic acid, as well as of the cathepsin K inhibitors F9775 A and F9775 B. The non-reducing polyketide synthase orsA produces orsellinic acid by condensing acetyl-CoA with 3 malonyl-CoA units. Further modifications by the decarboxylase orsB and the tyrosinase-like protein orsC lead to the production of F9775 A and F9775 B. The functions of orsD and orsE remain unclear since only orsB and orsC are required to convert orsellinic acid into F9775 A and F9775 B. The protein is Orsellinic acid/F9775 biosynthesis cluster protein D of Emericella nidulans (strain FGSC A4 / ATCC 38163 / CBS 112.46 / NRRL 194 / M139) (Aspergillus nidulans).